Reading from the N-terminus, the 81-residue chain is Antimicrobial peptide Con22 (81 aa).

Residues 1-22 form the signal peptide; the sequence is MNAKVMLVCLLVTMLVMEPAEA. The propeptide occupies 66 to 81; that stretch reads EAGQIPFDEFMNVLYS.

The protein belongs to the non-disulfide-bridged peptide (NDBP) superfamily. Long chain multifunctional peptide (group 2) family. Expressed by the venom gland.

It localises to the secreted. Its subcellular location is the target cell membrane. Functionally, at high concentrations, acts as a pore former in cellular membranes and causes the leakage of the cells. At submicromolar concentrations, degranulates granulocytes and has a weak hemolytic activity against human erythrocytes. Also strongly inhibits the production of superoxide anions. Has a strong antibacterial activity against Gram-negative bacteria but is less active against Gram-positive bacteria. Also has antifungal activity. The chain is Antimicrobial peptide Con22 from Urodacus yaschenkoi (Inland robust scorpion).